The primary structure comprises 795 residues: Lon protease (795 aa).

The Lon N-terminal domain occupies 17 to 214; it reads YPLMPLRDIV…KVYKFLQDEI (198 aa). 370–377 lines the ATP pocket; sequence GPPGVGKT. In terms of domain architecture, Lon proteolytic spans 605 to 787; the sequence is KPLVGVATGL…EEVFKIALVR (183 aa). Catalysis depends on residues S692 and K735.

It belongs to the peptidase S16 family. Homohexamer. Organized in a ring with a central cavity.

It is found in the cytoplasm. It catalyses the reaction Hydrolysis of proteins in presence of ATP.. In terms of biological role, ATP-dependent serine protease that mediates the selective degradation of mutant and abnormal proteins as well as certain short-lived regulatory proteins. Required for cellular homeostasis and for survival from DNA damage and developmental changes induced by stress. Degrades polypeptides processively to yield small peptide fragments that are 5 to 10 amino acids long. Binds to DNA in a double-stranded, site-specific manner. The polypeptide is Lon protease (Aquifex aeolicus (strain VF5)).